A 137-amino-acid polypeptide reads, in one-letter code: Histone H2B.3 (137 aa).

Over residues lysine 1 to aspartate 37 the composition is skewed to basic and acidic residues. The disordered stretch occupies residues lysine 1–lysine 45. N6-acetyllysine occurs at positions 27 and 28. Lysine 133 participates in a covalent cross-link: Glycyl lysine isopeptide (Lys-Gly) (interchain with G-Cter in ubiquitin).

Belongs to the histone H2B family. In terms of assembly, the nucleosome is a histone octamer containing two molecules each of H2A, H2B, H3 and H4 assembled in one H3-H4 heterotetramer and two H2A-H2B heterodimers. The octamer wraps approximately 147 bp of DNA. Post-translationally, can be acetylated to formH2BK33ac and H2BK34ac. In terms of processing, monoubiquitinated to form H2BK143ub1; may give a specific tag for epigenetic transcriptional activation. Ubiquitous. Highest level in shoots, fruits and young flower buds, including petals, anthers and ovules.

Its subcellular location is the nucleus. It localises to the chromosome. In terms of biological role, core component of nucleosome. Nucleosomes wrap and compact DNA into chromatin, limiting DNA accessibility to the cellular machineries which require DNA as a template. Histones thereby play a central role in transcription regulation, DNA repair, DNA replication and chromosomal stability. DNA accessibility is regulated via a complex set of post-translational modifications of histones, also called histone code, and nucleosome remodeling. This Solanum lycopersicum (Tomato) protein is Histone H2B.3 (H2B-3).